Consider the following 136-residue polypeptide: Large ribosomal subunit protein eL27A (136 aa).

Belongs to the eukaryotic ribosomal protein eL27 family. As to quaternary structure, component of the large ribosomal subunit (LSU). Mature yeast ribosomes consist of a small (40S) and a large (60S) subunit. The 40S small subunit contains 1 molecule of ribosomal RNA (18S rRNA) and at least 33 different proteins. The large 60S subunit contains 3 rRNA molecules (25S, 5.8S and 5S rRNA) and at least 46 different proteins.

The protein resides in the cytoplasm. It localises to the nucleus. Component of the ribosome, a large ribonucleoprotein complex responsible for the synthesis of proteins in the cell. The small ribosomal subunit (SSU) binds messenger RNAs (mRNAs) and translates the encoded message by selecting cognate aminoacyl-transfer RNA (tRNA) molecules. The large subunit (LSU) contains the ribosomal catalytic site termed the peptidyl transferase center (PTC), which catalyzes the formation of peptide bonds, thereby polymerizing the amino acids delivered by tRNAs into a polypeptide chain. The nascent polypeptides leave the ribosome through a tunnel in the LSU and interact with protein factors that function in enzymatic processing, targeting, and the membrane insertion of nascent chains at the exit of the ribosomal tunnel. In Schizosaccharomyces pombe (strain 972 / ATCC 24843) (Fission yeast), this protein is Large ribosomal subunit protein eL27A (rpl2701).